We begin with the raw amino-acid sequence, 970 residues long: Sodium/calcium exchanger 1 (970 aa).

The first 32 residues, Met-1–Ala-32, serve as a signal peptide directing secretion. At Glu-33 to Lys-71 the chain is on the extracellular side. A glycan (N-linked (GlcNAc...) asparagine) is linked at Asn-41. Residues Ile-72 to Ile-92 form a helical membrane-spanning segment. At Ala-93 to Asn-133 the chain is on the cytoplasmic side. A helical membrane pass occupies residues Leu-134–Cys-154. One copy of the Alpha-1 repeat lies at Ala-138–Ile-178. Topologically, residues Gly-155–Thr-167 are extracellular. Asn-157 is a glycosylation site (N-linked (GlcNAc...) asparagine). Residues Ile-168–Pro-188 traverse the membrane as a helical segment. Topologically, residues Asp-189–Phe-201 are cytoplasmic. A helical membrane pass occupies residues Phe-202 to Ser-222. Topologically, residues Ser-223–Glu-228 are extracellular. Residues Val-229–Ala-249 form a helical membrane-spanning segment. At Asp-250–Gly-797 the chain is on the cytoplasmic side. The putative calmodulin-binding region stretch occupies residues Arg-251–Gly-270. Phosphoserine occurs at positions 282 and 389. 2 Calx-beta domains span residues Val-393 to Ser-493 and Ala-524 to Gly-624. Glu-417, Asp-453, Asp-478, Asp-479, Ile-481, Glu-483, Glu-486, Asp-530, Asp-531, Asp-532, Glu-548, Asp-584, Asp-610, Glu-611, Glu-612, and Glu-715 together coordinate Ca(2+). A helical membrane pass occupies residues Trp-798–Leu-818. Topologically, residues Ala-819–His-821 are extracellular. The helical transmembrane segment at Phe-822–Thr-842 threads the bilayer. The stretch at Ala-839–Val-875 is one Alpha-2 repeat. Over Ser-843–Asn-871 the chain is Cytoplasmic. The helical transmembrane segment at Ala-872 to Ala-892 threads the bilayer. Over Asn-893 to Thr-903 the chain is Extracellular. A helical transmembrane segment spans residues Leu-904 to Tyr-924. Over Arg-925–Lys-941 the chain is Cytoplasmic. Residues Leu-942–Glu-962 form a helical membrane-spanning segment. The Extracellular portion of the chain corresponds to Ala-963–Phe-970.

Belongs to the Ca(2+):cation antiporter (CaCA) (TC 2.A.19) family. SLC8 subfamily.

It is found in the cell membrane. It catalyses the reaction Ca(2+)(in) + 3 Na(+)(out) = Ca(2+)(out) + 3 Na(+)(in). Activated by micromolar levels of Ca(2+). Functionally, mediates the exchange of one Ca(2+) ion against three to four Na(+) ions across the cell membrane, and thereby contributes to the regulation of cytoplasmic Ca(2+) levels and Ca(2+)-dependent cellular processes. Contributes to Ca(2+) transport during excitation-contraction coupling in muscle. In a first phase, voltage-gated channels mediate the rapid increase of cytoplasmic Ca(2+) levels due to release of Ca(2+) stores from the endoplasmic reticulum. SLC8A1 mediates the export of Ca(2+) from the cell during the next phase, so that cytoplasmic Ca(2+) levels rapidly return to baseline. Required for normal embryonic heart development and the onset of heart contractions. This is Sodium/calcium exchanger 1 (SLC8A1) from Bos taurus (Bovine).